The primary structure comprises 261 residues: Cytochrome c oxidase subunit 3 (261 aa).

Topologically, residues 1–15 (MTHQSHAYHMVKPSP) are mitochondrial matrix. A helical membrane pass occupies residues 16–34 (WPLTGALSALLMTSGLAMW). Topologically, residues 35–40 (FHFYST) are mitochondrial intermembrane. The helical transmembrane segment at 41–66 (TLLTLGLLTNTLTMYQWWRDVMREGT) threads the bilayer. Residues 67-72 (YQGHHT) lie on the Mitochondrial matrix side of the membrane. A helical transmembrane segment spans residues 73 to 105 (PPVQKGLRYGMILFITSEVFFFAGFFWAFYHSS). At 106–128 (LAPTPQLGGHWPPTGITPLNPLE) the chain is on the mitochondrial intermembrane side. A helical membrane pass occupies residues 129–152 (VPLLNTSVLLASGVSITWAHHSLM). The Mitochondrial matrix segment spans residues 153–155 (ENN). The helical transmembrane segment at 156–183 (RNQMIQALLITILLGLYFTLLQASEYFE) threads the bilayer. The Mitochondrial intermembrane segment spans residues 184 to 190 (SPFTISD). A helical transmembrane segment spans residues 191–223 (GIYGSTFFVATGFHGLHVIIGSTFLTICLIRQL). Residues 224-232 (MFHFTSKHH) are Mitochondrial matrix-facing. Residues 233–256 (FGFQAAAWYWHFVDVVWLFLYVSI) form a helical membrane-spanning segment. Residues 257-261 (YWWGS) are Mitochondrial intermembrane-facing.

The protein belongs to the cytochrome c oxidase subunit 3 family. Component of the cytochrome c oxidase (complex IV, CIV), a multisubunit enzyme composed of 14 subunits. The complex is composed of a catalytic core of 3 subunits MT-CO1, MT-CO2 and MT-CO3, encoded in the mitochondrial DNA, and 11 supernumerary subunits COX4I, COX5A, COX5B, COX6A, COX6B, COX6C, COX7A, COX7B, COX7C, COX8 and NDUFA4, which are encoded in the nuclear genome. The complex exists as a monomer or a dimer and forms supercomplexes (SCs) in the inner mitochondrial membrane with NADH-ubiquinone oxidoreductase (complex I, CI) and ubiquinol-cytochrome c oxidoreductase (cytochrome b-c1 complex, complex III, CIII), resulting in different assemblies (supercomplex SCI(1)III(2)IV(1) and megacomplex MCI(2)III(2)IV(2)).

The protein resides in the mitochondrion inner membrane. The catalysed reaction is 4 Fe(II)-[cytochrome c] + O2 + 8 H(+)(in) = 4 Fe(III)-[cytochrome c] + 2 H2O + 4 H(+)(out). Its function is as follows. Component of the cytochrome c oxidase, the last enzyme in the mitochondrial electron transport chain which drives oxidative phosphorylation. The respiratory chain contains 3 multisubunit complexes succinate dehydrogenase (complex II, CII), ubiquinol-cytochrome c oxidoreductase (cytochrome b-c1 complex, complex III, CIII) and cytochrome c oxidase (complex IV, CIV), that cooperate to transfer electrons derived from NADH and succinate to molecular oxygen, creating an electrochemical gradient over the inner membrane that drives transmembrane transport and the ATP synthase. Cytochrome c oxidase is the component of the respiratory chain that catalyzes the reduction of oxygen to water. Electrons originating from reduced cytochrome c in the intermembrane space (IMS) are transferred via the dinuclear copper A center (CU(A)) of subunit 2 and heme A of subunit 1 to the active site in subunit 1, a binuclear center (BNC) formed by heme A3 and copper B (CU(B)). The BNC reduces molecular oxygen to 2 water molecules using 4 electrons from cytochrome c in the IMS and 4 protons from the mitochondrial matrix. The sequence is that of Cytochrome c oxidase subunit 3 (MT-CO3) from Pan troglodytes (Chimpanzee).